The following is a 441-amino-acid chain: Ribosomal protein uS12 methylthiotransferase RimO (441 aa).

The MTTase N-terminal domain maps to 7-117 (PKISFVSLGC…VLDAVHRAKP (111 aa)). [4Fe-4S] cluster-binding residues include C16, C52, C81, C148, C152, and C155. Positions 134 to 371 (LTPRHYAYLK…MARQQAISAR (238 aa)) constitute a Radical SAM core domain. The region spanning 374-440 (KRKVGTRQQI…AYDLHGTVAG (67 aa)) is the TRAM domain.

The protein belongs to the methylthiotransferase family. RimO subfamily. [4Fe-4S] cluster is required as a cofactor.

The protein resides in the cytoplasm. It carries out the reaction L-aspartate(89)-[ribosomal protein uS12]-hydrogen + (sulfur carrier)-SH + AH2 + 2 S-adenosyl-L-methionine = 3-methylsulfanyl-L-aspartate(89)-[ribosomal protein uS12]-hydrogen + (sulfur carrier)-H + 5'-deoxyadenosine + L-methionine + A + S-adenosyl-L-homocysteine + 2 H(+). Catalyzes the methylthiolation of an aspartic acid residue of ribosomal protein uS12. The sequence is that of Ribosomal protein uS12 methylthiotransferase RimO from Rhodopseudomonas palustris (strain HaA2).